We begin with the raw amino-acid sequence, 425 residues long: Serine--tRNA ligase (425 aa).

233-235 (TAE) lines the L-serine pocket. 264-266 (RRE) is a binding site for ATP. E287 provides a ligand contact to L-serine. 351–354 (EISS) serves as a coordination point for ATP. L-serine is bound at residue S385.

Belongs to the class-II aminoacyl-tRNA synthetase family. Type-1 seryl-tRNA synthetase subfamily. Homodimer. The tRNA molecule binds across the dimer.

It is found in the cytoplasm. It catalyses the reaction tRNA(Ser) + L-serine + ATP = L-seryl-tRNA(Ser) + AMP + diphosphate + H(+). The catalysed reaction is tRNA(Sec) + L-serine + ATP = L-seryl-tRNA(Sec) + AMP + diphosphate + H(+). The protein operates within aminoacyl-tRNA biosynthesis; selenocysteinyl-tRNA(Sec) biosynthesis; L-seryl-tRNA(Sec) from L-serine and tRNA(Sec): step 1/1. Its function is as follows. Catalyzes the attachment of serine to tRNA(Ser). Is also able to aminoacylate tRNA(Sec) with serine, to form the misacylated tRNA L-seryl-tRNA(Sec), which will be further converted into selenocysteinyl-tRNA(Sec). The polypeptide is Serine--tRNA ligase (Prochlorococcus marinus (strain MIT 9515)).